A 77-amino-acid chain; its full sequence is MKLIIFTGLVLFAIVSLIEVQADNERACLPQYQVCTEAPGNCCSNLVCDCYGRYKSGARIGRNCFCLQKGVIYKREN.

The first 20 residues, 1–20, serve as a signal peptide directing secretion; it reads MKLIIFTGLVLFAIVSLIEV. Positions 21-26 are excised as a propeptide; sequence QADNER.

This sequence belongs to the neurotoxin 19 (CSTX) family. 08 (U8-Lctx) subfamily. Contains 4 disulfide bonds. In terms of tissue distribution, expressed by the venom gland.

Its subcellular location is the secreted. This Lycosa singoriensis (Wolf spider) protein is U8-lycotoxin-Ls1i.